A 97-amino-acid chain; its full sequence is Protein YcgL (97 aa).

A YcgL domain is found at 1-85 (MLCVIYRSSK…PPEDLLKQHL (85 aa)).

The polypeptide is Protein YcgL (Escherichia fergusonii (strain ATCC 35469 / DSM 13698 / CCUG 18766 / IAM 14443 / JCM 21226 / LMG 7866 / NBRC 102419 / NCTC 12128 / CDC 0568-73)).